The primary structure comprises 191 residues: Ribosomal RNA small subunit methyltransferase G (191 aa).

Residues glycine 62, phenylalanine 67, 111 to 112 (IE), and arginine 124 contribute to the S-adenosyl-L-methionine site.

Belongs to the methyltransferase superfamily. RNA methyltransferase RsmG family.

The protein resides in the cytoplasm. It carries out the reaction guanosine(527) in 16S rRNA + S-adenosyl-L-methionine = N(7)-methylguanosine(527) in 16S rRNA + S-adenosyl-L-homocysteine. Its function is as follows. Specifically methylates the N7 position of guanine in position 527 of 16S rRNA. The sequence is that of Ribosomal RNA small subunit methyltransferase G from Rickettsia akari (strain Hartford).